A 935-amino-acid chain; its full sequence is MRRIDKIYHQLKHNFHDSTLDHLLKIQGNSAKEIAEQLKMERSNVSFELNNLVRSKKVIKIKTFPVRYIPVEIAEKLFNKKWDTEMMEVKDLQAFSGNSKQNHQHISTNPLELMIGAKGSLKKAISQAKAAVFYPPNGLHMLLLGPTGSGKSLFANRIYQFAIYSDILKAGAPFITFNCADYYNNPQLLLSQLFGHKKGSFTGAAEDKAGLVEQANGGILFMDEIHRLPPEGQEMLFYFIDSGSYNRLGESEHKRTSNVLFICATTENPSSALLKTFLRRIPMTIHIPSLEERSLNERVDLTTFLLGKEAERIKKNLSVHIDVYNALIHSAKFGNVGQLKSNVQLVCAHGFLHNLDRNEVIELTVRDLPDEIKQEWMSSSKNMQRSKAISEYVNITTIISPIVEDETTKIDEDLSFNLYHLIEEKVKTLMKEGLSKKDINQYILTDVHLHVRSFFHHQAFQKDNLLTFVEDDVIQMTKQLKEIAEHELDCTFDRKFIYFLSMHIDAFLKRGKQIDVLNTQETDEIRDTHVKEYRVAMIFKDKIQEYFKVAIPEIEVIYLTMLIHSIKSLKENKRVGIIVAAHGNSTASSMVEVATELLGSTPIAAVDMPLTVSPSDILECVAEKMKQVDEGEGVLMLVDMGSLAMLESRLEEKTGISIKTISNVTTSMVLDAVRKVNYLNLNLHAIYQSVTKDFIELWERQPAASGKKKALVSICTTGSGTAKKLEDILTTIVNKASDTPIHILTVSSIKLANSIKEIEKEYEILATVGTKDPKINAPHVSLEVLIEGEGEKLIQQAITKGSISLSNGLNEANIIVRELCEDSLKKYLVFLNPHHVIDMLLEWLQTVQDELGVIFNNAVLIKVIMHTAFAFERVIKQNPIAFSEEEEINDQLKEMVYVTERTLAPYEEKLGLRISDDEKLFIAAIFAEEVHGQLF.

The 232-residue stretch at 117-348 (AKGSLKKAIS…LKSNVQLVCA (232 aa)) folds into the Sigma-54 factor interaction domain. Residues 145–152 (GPTGSGKS) and 215–224 (ANGGILFMDE) each bind ATP. The 106-residue stretch at 468–573 (FVEDDVIQMT…HSIKSLKENK (106 aa)) folds into the PRD 1 domain. His503 carries the post-translational modification Phosphohistidine. The PTS EIIA type-4 domain maps to 574–711 (RVGIIVAAHG…PAASGKKKAL (138 aa)). His582 carries the phosphohistidine; by HPr modification. Positions 831-935 (LNPHHVIDML…FAEEVHGQLF (105 aa)) constitute a PRD 2 domain. Residue His866 is modified to Phosphohistidine.

This sequence belongs to the transcriptional antiterminator BglG family. In terms of processing, possibly phosphorylated and inactivated by the PTS system.

Its function is as follows. Involved in positive regulation of the levanase operon which comprises the levDEFG genes for a fructose PTS system, and sacA for levanase. The polypeptide is Transcriptional regulatory protein LevR (levR) (Bacillus subtilis (strain 168)).